The following is a 456-amino-acid chain: Bifunctional protein GlmU (456 aa).

Positions 1–229 (MLNNAMSVVI…LSEVEGVNNR (229 aa)) are pyrophosphorylase. UDP-N-acetyl-alpha-D-glucosamine contacts are provided by residues 11–14 (LAAG), K25, Q76, 81–82 (GT), 103–105 (YGD), G140, E154, N169, and N227. Residue D105 coordinates Mg(2+). N227 lines the Mg(2+) pocket. The tract at residues 230 to 250 (LQLSRLERVYQSEQAEKLLLA) is linker. An N-acetyltransferase region spans residues 251-456 (GVMLRDPARF…EGWRRPVKKK (206 aa)). UDP-N-acetyl-alpha-D-glucosamine contacts are provided by R333 and K351. The Proton acceptor role is filled by H363. UDP-N-acetyl-alpha-D-glucosamine-binding residues include Y366 and N377. Acetyl-CoA contacts are provided by residues A380, 386-387 (NY), S405, A423, and R440.

This sequence in the N-terminal section; belongs to the N-acetylglucosamine-1-phosphate uridyltransferase family. It in the C-terminal section; belongs to the transferase hexapeptide repeat family. As to quaternary structure, homotrimer. The cofactor is Mg(2+).

Its subcellular location is the cytoplasm. The enzyme catalyses alpha-D-glucosamine 1-phosphate + acetyl-CoA = N-acetyl-alpha-D-glucosamine 1-phosphate + CoA + H(+). It catalyses the reaction N-acetyl-alpha-D-glucosamine 1-phosphate + UTP + H(+) = UDP-N-acetyl-alpha-D-glucosamine + diphosphate. It participates in nucleotide-sugar biosynthesis; UDP-N-acetyl-alpha-D-glucosamine biosynthesis; N-acetyl-alpha-D-glucosamine 1-phosphate from alpha-D-glucosamine 6-phosphate (route II): step 2/2. The protein operates within nucleotide-sugar biosynthesis; UDP-N-acetyl-alpha-D-glucosamine biosynthesis; UDP-N-acetyl-alpha-D-glucosamine from N-acetyl-alpha-D-glucosamine 1-phosphate: step 1/1. It functions in the pathway bacterial outer membrane biogenesis; LPS lipid A biosynthesis. Catalyzes the last two sequential reactions in the de novo biosynthetic pathway for UDP-N-acetylglucosamine (UDP-GlcNAc). The C-terminal domain catalyzes the transfer of acetyl group from acetyl coenzyme A to glucosamine-1-phosphate (GlcN-1-P) to produce N-acetylglucosamine-1-phosphate (GlcNAc-1-P), which is converted into UDP-GlcNAc by the transfer of uridine 5-monophosphate (from uridine 5-triphosphate), a reaction catalyzed by the N-terminal domain. The sequence is that of Bifunctional protein GlmU from Shigella flexneri serotype 5b (strain 8401).